The chain runs to 1014 residues: Disease resistance protein RGA4 (1014 aa).

Residues 1 to 182 (MEAALLSGFI…PRIHEADLVG (182 aa)) are structured coiled coil (CC) domain. Residues 105-145 (RTVRATKKLLQTNQHLAQELQRLKRMVEEANQRKQRYTAAA) are a coiled coil. Residues 189-466 (ELLEQLAERQ…WLAEGFVEPV (278 aa)) enclose the NB-ARC domain. LRR repeat units follow at residues 484–506 (RNIIEPINVSNNDKVKTCQTYGM), 507–530 (MREFISHMSISQNFVTFFCDDKFL), 531–552 (PKYVRRLSLHGDTVVNGDNFNG), 580–602 (LRVLDLEKCDDLNDDHLKEICNL), 603–624 (VLLKYLSLGGNISKLPKDIAKL), 625–647 (KDLEALDVRRSKVKIMPVEVFGL), 701–725 (MNKLRKLKIWCTSSAGSTDWTDLRE), 762–784 (PCYLSSLKLHGNFPQLPQFVTSL), 785–807 (RGLKELCLSSTKFTTGLLEALSN), 808–833 (LSYLQYLKLVADELEKFIIKVQGFPR), and 854–877 (LPFLVTLQLLCKDLHGLSDIKIEC).

Belongs to the disease resistance NB-LRR family. As to expression, expressed in leaves.

Its function is as follows. Probable disease resistance protein. Resistance proteins guard the plant against pathogens that contain an appropriate avirulence protein via an indirect interaction with this avirulence protein. That triggers a defense system including the hypersensitive response, which restricts the pathogen growth. At the opposite of cultivars Aichi asahi and Sasanishiki, the cultivars Nipponbare, Mokoto and Hitomebore don't recognize the effector avirulence protein AVR-Pia from M.oryzae. In Oryza sativa subsp. japonica (Rice), this protein is Disease resistance protein RGA4.